Reading from the N-terminus, the 146-residue chain is uncharacterized protein (146 aa).

Disordered regions lie at residues 1 to 33 and 50 to 70; these read MATFHRAHATSSVKPRARRHQEPNSGDWPGSYR and QHWRPRSLGAGQGREDPSWEG.

This is an uncharacterized protein from Homo sapiens (Human).